The sequence spans 251 residues: MNEAVKTLDGWFCLHDFRSIDWAAWRELNPGNQELMLNELSHFLSDMEITKNIGEGEHTIYSILGQKADLVFFTLRDSLEALNEVENRFNKLAIADYLLPTYSYISVVELSNYLASHMAGGEDPYQNKGVRARLYPALPPKKHICFYPMSKKRDGADNWYMLPMEERQQLIRDHGLIGRSYAGKVQQIIGGSIGFDDYEWGVTLFSDDALEFKRIVTEMRFDEASARYAEFGSFFIGNLLPSEQLSKLFTI.

Fe-coproporphyrin III contacts are provided by residues R133, 147 to 151 (YPMSK), H174, Q187, and S225. Residue Y147 is part of the active site.

It belongs to the ChdC family. Type 1 subfamily. The cofactor is Fe-coproporphyrin III.

It catalyses the reaction Fe-coproporphyrin III + 2 H2O2 + 2 H(+) = heme b + 2 CO2 + 4 H2O. It carries out the reaction Fe-coproporphyrin III + H2O2 + H(+) = harderoheme III + CO2 + 2 H2O. The enzyme catalyses harderoheme III + H2O2 + H(+) = heme b + CO2 + 2 H2O. It functions in the pathway porphyrin-containing compound metabolism; protoheme biosynthesis. Involved in coproporphyrin-dependent heme b biosynthesis. Catalyzes the decarboxylation of Fe-coproporphyrin III (coproheme) to heme b (protoheme IX), the last step of the pathway. The reaction occurs in a stepwise manner with a three-propionate intermediate. The protein is Coproheme decarboxylase of Listeria monocytogenes serotype 4b (strain CLIP80459).